Reading from the N-terminus, the 56-residue chain is Large ribosomal subunit protein bL32 (56 aa).

Residues 1–37 (MAVQQNKPTRSKRGMRRSHDALTAPLLSVDKTSGETH) are disordered.

The protein belongs to the bacterial ribosomal protein bL32 family.

This Photorhabdus laumondii subsp. laumondii (strain DSM 15139 / CIP 105565 / TT01) (Photorhabdus luminescens subsp. laumondii) protein is Large ribosomal subunit protein bL32.